The sequence spans 471 residues: ATP synthase subunit beta 2 (471 aa).

Residue 157–164 (GGAGVGKT) participates in ATP binding.

This sequence belongs to the ATPase alpha/beta chains family. F-type ATPases have 2 components, CF(1) - the catalytic core - and CF(0) - the membrane proton channel. CF(1) has five subunits: alpha(3), beta(3), gamma(1), delta(1), epsilon(1). CF(0) has three main subunits: a(1), b(2) and c(9-12). The alpha and beta chains form an alternating ring which encloses part of the gamma chain. CF(1) is attached to CF(0) by a central stalk formed by the gamma and epsilon chains, while a peripheral stalk is formed by the delta and b chains.

It is found in the cell inner membrane. It catalyses the reaction ATP + H2O + 4 H(+)(in) = ADP + phosphate + 5 H(+)(out). Its function is as follows. Produces ATP from ADP in the presence of a proton gradient across the membrane. The catalytic sites are hosted primarily by the beta subunits. This chain is ATP synthase subunit beta 2, found in Pelobacter propionicus (strain DSM 2379 / NBRC 103807 / OttBd1).